The chain runs to 436 residues: Anaerobic glycerol-3-phosphate dehydrogenase subunit B (436 aa).

It belongs to the anaerobic G-3-P dehydrogenase subunit B family. Composed of a catalytic GlpA/B dimer and of membrane bound GlpC. It depends on FMN as a cofactor.

It catalyses the reaction a quinone + sn-glycerol 3-phosphate = dihydroxyacetone phosphate + a quinol. The protein operates within polyol metabolism; glycerol degradation via glycerol kinase pathway; glycerone phosphate from sn-glycerol 3-phosphate (anaerobic route): step 1/1. Conversion of glycerol 3-phosphate to dihydroxyacetone. Uses fumarate or nitrate as electron acceptor. The protein is Anaerobic glycerol-3-phosphate dehydrogenase subunit B of Vibrio cholerae serotype O1 (strain ATCC 39315 / El Tor Inaba N16961).